A 789-amino-acid polypeptide reads, in one-letter code: MTGLSPSGDIKPLLDDESQRPRVITPFPSPKLTDLSMFQGEHKESLYWGTYRPQMYFGVRARTPKSLVAGLMWLVMKDGKPVMRHFCENSNDLKSFGWKEHNGRDFGRQELFEQNMVLETSFVKSEEGSLGYGGDWSIRINVQNMLNDDEVKRSTHLFFYLADEGCNGVNLGKDVLRLKESSVLASGSRQDVGNWQMHLKSQNHLETHYCGFKTPDIVNLSGLVQQNLTAQEEKSGLLQLSDSSEDSSNIYVFQISTTNQSTIDIAFVSGIKEETSNMENRIMSLTGLPLSSLLEEKHIAFNAKFNECFNLSDKLDPETLVVGKAAIGNMLGGIGYFYGQSKIHFPKSPLAKSEDDFLLYWPAELYTAVPSRPRFPRGFLWDEGFHQLLIWRWDVHITLEIVGNWLDLMNIDGWIPREQVLGAEALSKIPKQYVVQFPSNGNPPTLLLVIRDLINGIRTEKFNEADRDKILSFLDRAFVRLDAWFKWFNTSQIGKEKGSYYWHGRDNITNRELNPQSLSSGLDDYPRASHPNEDERHVDLRCWMYLAADSMNSIQEFMGKNDILVTEDYSSIAKLLSDFTLLNQMHYDKDHGAYLDFGNHTEEVRLVWKEVIHEDGHLSRELVRETYGKPELRLVPHIGYVSFFPFMFRIIPADSSILDKQLDLISNGNIVWSDYGLLSLAKTSSLYMKYNSEHQAPYWRGAIWMNMNYMILSSLHHYSTVDGPYNSKARTIYEELRSNLIRNVVRNYDQTGIIWEHYDQTKGTGEGARVFTGWSALILLIMSEEYPLF.

Disordered regions lie at residues 1–24 (MTGL…PRVI) and 512–531 (ELNP…ASHP). The active-site Proton donor is the D523. The active-site Proton acceptor is the E756.

The protein belongs to the glycosyl hydrolase 63 family.

Its pathway is glycan metabolism; N-glycan degradation. The chain is Alpha-glucosidase 2 (GCS2) from Arabidopsis thaliana (Mouse-ear cress).